We begin with the raw amino-acid sequence, 128 residues long: Large ribosomal subunit protein bL17 (128 aa).

This sequence belongs to the bacterial ribosomal protein bL17 family. Part of the 50S ribosomal subunit. Contacts protein L32.

This chain is Large ribosomal subunit protein bL17, found in Streptococcus gordonii (strain Challis / ATCC 35105 / BCRC 15272 / CH1 / DL1 / V288).